Consider the following 805-residue polypeptide: Muscarinic acetylcholine receptor DM1 (805 aa).

Over 1–100 (MEPVMSLALA…GFETKGPRYS (100 aa)) the chain is Extracellular. The segment covering 27 to 43 (TSTTTTTTTTTSTTTTT) has biased composition (low complexity). The segment at 27 to 47 (TSTTTTTTTTTSTTTTTASPA) is disordered. N-linked (GlcNAc...) asparagine glycans are attached at residues Asn-65, Asn-84, and Asn-87. A helical transmembrane segment spans residues 101 to 121 (LASMVVMGFVAAILSTVTVAG). Over 122-141 (NVMVMISFKIDKQLQTISNY) the chain is Cytoplasmic. The chain crosses the membrane as a helical span at residues 142 to 162 (FLFSLAIADFAIGAISMPLFA). Topologically, residues 163–177 (VTTILGYWPLGPIVC) are extracellular. The chain crosses the membrane as a helical span at residues 178–198 (DTWLALDYLASNASVLNLLII). The Cytoplasmic segment spans residues 199-220 (SFDRYFSVTRPLTYRAKRTTNR). A helical membrane pass occupies residues 221–241 (AAVMIGAAWGISLLLWPPWIY). Residues 242 to 266 (SWPYIEGKRTVPKDECYIQFIETNQ) lie on the Extracellular side of the membrane. A helical membrane pass occupies residues 267 to 287 (YITFGTALAAFYFPVTIMCFL). Residues 288-718 (YWRIWRETKK…KRQESKAAKT (431 aa)) lie on the Cytoplasmic side of the membrane. Disordered regions lie at residues 302-322 (LPNL…SDEN), 340-359 (GNDH…DAES), and 507-530 (GNGN…VNGN). Basic and acidic residues-rich tracts occupy residues 308–318 (GKKDSSKRSNS) and 341–353 (NDHD…RSES). Over residues 507–525 (GNGNGAINNNNNASHNGNG) the composition is skewed to low complexity. Residues 719–739 (LSAILLSFIITWTPYNILVLI) form a helical membrane-spanning segment. At 740–752 (KPLTTCSDCIPTE) the chain is on the extracellular side. A helical membrane pass occupies residues 753–773 (LWDFFYALCYINSTINPMCYA). The Cytoplasmic portion of the chain corresponds to 774–805 (LCNATFRRTYVRILTCKWHTRNREGMVRGVYN).

The protein belongs to the G-protein coupled receptor 1 family. Muscarinic acetylcholine receptor subfamily. Intense staining in the glomeruli of the antennal lobes, the region of the nervous system containing terminals of antennal olfactory sensory neurons and mechanosensory neurons. Also a discrete group of neurosecretory cells in the pars intercerebralis of the brain.

The protein localises to the cell membrane. It localises to the postsynaptic cell membrane. Functionally, the muscarinic acetylcholine receptor mediates various cellular responses, including inhibition of adenylate cyclase, breakdown of phosphoinositides and modulation of potassium channels through the action of G proteins. Primary transducing effect is Pi turnover. May have a role in the processing of olfactory and mechanosensory signals; regulation of neurosecretion. The sequence is that of Muscarinic acetylcholine receptor DM1 (mAChR-A) from Drosophila melanogaster (Fruit fly).